The following is a 134-amino-acid chain: Putative integral membrane protein YxzK (134 aa).

Helical transmembrane passes span 3–23 (VIRI…GEAI), 35–55 (IVGL…VSII), 58–78 (GAGF…TGVI), and 89–109 (LMLL…AGFA).

It localises to the cell membrane. The protein is Putative integral membrane protein YxzK (yxzK) of Bacillus subtilis (strain 168).